The sequence spans 344 residues: N-acetyl-gamma-glutamyl-phosphate reductase (344 aa).

Cys150 is an active-site residue.

It belongs to the NAGSA dehydrogenase family. Type 1 subfamily.

The protein localises to the cytoplasm. It catalyses the reaction N-acetyl-L-glutamate 5-semialdehyde + phosphate + NADP(+) = N-acetyl-L-glutamyl 5-phosphate + NADPH + H(+). Its pathway is amino-acid biosynthesis; L-arginine biosynthesis; N(2)-acetyl-L-ornithine from L-glutamate: step 3/4. Its function is as follows. Catalyzes the NADPH-dependent reduction of N-acetyl-5-glutamyl phosphate to yield N-acetyl-L-glutamate 5-semialdehyde. The chain is N-acetyl-gamma-glutamyl-phosphate reductase from Pseudomonas fluorescens (strain SBW25).